The following is a 382-amino-acid chain: V-type proton ATPase subunit C 1 (382 aa).

T2 carries the N-acetylthreonine modification.

It belongs to the V-ATPase C subunit family. As to quaternary structure, V-ATPase is a heteromultimeric enzyme made up of two complexes: the ATP-hydrolytic V1 complex and the proton translocation V0 complex. The V1 complex consists of three catalytic AB heterodimers that form a heterohexamer, three peripheral stalks each consisting of EG heterodimers, one central rotor including subunits D and F, and the regulatory subunits C and H. The proton translocation complex V0 consists of the proton transport subunit a, a ring of proteolipid subunits c9c'', rotary subunit d, subunits e and f, and the accessory subunits ATP6AP1/Ac45 and ATP6AP2/PRR.

Its subcellular location is the cytoplasmic vesicle. It is found in the secretory vesicle. The protein localises to the synaptic vesicle membrane. It localises to the clathrin-coated vesicle membrane. Functionally, subunit of the V1 complex of vacuolar(H+)-ATPase (V-ATPase), a multisubunit enzyme composed of a peripheral complex (V1) that hydrolyzes ATP and a membrane integral complex (V0) that translocates protons. V-ATPase is responsible for acidifying and maintaining the pH of intracellular compartments and in some cell types, is targeted to the plasma membrane, where it is responsible for acidifying the extracellular environment. Subunit C is necessary for the assembly of the catalytic sector of the enzyme and is likely to have a specific function in its catalytic activity. In Macaca fascicularis (Crab-eating macaque), this protein is V-type proton ATPase subunit C 1 (ATP6V1C1).